The chain runs to 249 residues: FMN reductase [NAD(P)H] (249 aa).

FMN is bound by residues 11–15 (HRSIR), Gln67, 134–136 (PIG), and 173–175 (KPR).

This sequence belongs to the flavin oxidoreductase frp family. In terms of assembly, homodimer.

The enzyme catalyses FMNH2 + NADP(+) = FMN + NADPH + 2 H(+). It catalyses the reaction FMNH2 + NAD(+) = FMN + NADH + 2 H(+). Its activity is regulated as follows. FMN is a competitive inhibitor of NADH, and therefore leads to the preferential utilization of NADPH. Reduces FMNH(2) to FMN, with NADH or NADPH as reductant. It also reduces nitroaromatic compounds, quinones, chromates and azo dyes. It could supply the reduced form of FMN to luciferase-like protein and contribute to the degradation of aromatic compounds. The polypeptide is FMN reductase [NAD(P)H] (nfrA2) (Bacillus subtilis (strain 168)).